A 178-amino-acid chain; its full sequence is Inorganic pyrophosphatase (178 aa).

Lys-30, Arg-44, and Tyr-56 together coordinate substrate. 3 residues coordinate Mg(2+): Asp-66, Asp-71, and Asp-103. Tyr-140 lines the substrate pocket.

This sequence belongs to the PPase family. Homohexamer. Requires Mg(2+) as cofactor.

The protein localises to the cytoplasm. The catalysed reaction is diphosphate + H2O = 2 phosphate + H(+). Its function is as follows. Catalyzes the hydrolysis of inorganic pyrophosphate (PPi) forming two phosphate ions. In Thermococcus kodakarensis (strain ATCC BAA-918 / JCM 12380 / KOD1) (Pyrococcus kodakaraensis (strain KOD1)), this protein is Inorganic pyrophosphatase.